A 307-amino-acid chain; its full sequence is tRNA dimethylallyltransferase (307 aa).

Position 11–18 (11–18) interacts with ATP; that stretch reads GPTGSGKT. 13-18 provides a ligand contact to substrate; sequence TGSGKT. The interaction with substrate tRNA stretch occupies residues 36–39; the sequence is DSVA.

It belongs to the IPP transferase family. As to quaternary structure, monomer. It depends on Mg(2+) as a cofactor.

It catalyses the reaction adenosine(37) in tRNA + dimethylallyl diphosphate = N(6)-dimethylallyladenosine(37) in tRNA + diphosphate. In terms of biological role, catalyzes the transfer of a dimethylallyl group onto the adenine at position 37 in tRNAs that read codons beginning with uridine, leading to the formation of N6-(dimethylallyl)adenosine (i(6)A). This Koribacter versatilis (strain Ellin345) protein is tRNA dimethylallyltransferase.